A 445-amino-acid polypeptide reads, in one-letter code: Phospho-alpha-glucosidase PagL (445 aa).

An NAD(+)-binding site is contributed by 4–71 (YSICIVGGGS…ELEEVIWTTD (68 aa)). Substrate-binding residues include Arg-94 and Asn-148. Cys-171 contributes to the Mn(2+) binding site. The Proton donor role is filled by Asp-172. His-201 is a Mn(2+) binding site. Tyr-264 functions as the Proton acceptor in the catalytic mechanism. Substrate is bound at residue Arg-284.

Belongs to the glycosyl hydrolase 4 family. As to quaternary structure, homotetramer. Requires NAD(+) as cofactor. Mn(2+) serves as cofactor.

Its function is as follows. Phospho-alpha-glucosidase that catalyzes the hydrolysis of p-nitrophenyl-alpha-D-glucopyranoside 6-phosphate, but is not able to cleave 'natural' phospho-alpha-glucosides produced via the phosphoenolpyruvate-dependent sugar phosphotransferase system (PEP-PTS). This is Phospho-alpha-glucosidase PagL (pagL) from Clostridium acetobutylicum (strain ATCC 824 / DSM 792 / JCM 1419 / IAM 19013 / LMG 5710 / NBRC 13948 / NRRL B-527 / VKM B-1787 / 2291 / W).